We begin with the raw amino-acid sequence, 356 residues long: Protein pelota homolog (356 aa).

This sequence belongs to the eukaryotic release factor 1 family. Pelota subfamily. In terms of assembly, monomer. The cofactor is a divalent metal cation.

The protein resides in the cytoplasm. May function in recognizing stalled ribosomes, interact with stem-loop structures in stalled mRNA molecules, and effect endonucleolytic cleavage of the mRNA. May play a role in the release non-functional ribosomes and degradation of damaged mRNAs. Has endoribonuclease activity. In Pyrococcus horikoshii (strain ATCC 700860 / DSM 12428 / JCM 9974 / NBRC 100139 / OT-3), this protein is Protein pelota homolog.